Reading from the N-terminus, the 1452-residue chain is Receptor-type tyrosine-protein phosphatase mu (1452 aa).

An N-terminal signal peptide occupies residues 1–20; it reads MRTLGTCLVTLAGLLLTAAG. The Extracellular portion of the chain corresponds to 21–742; the sequence is ETFSGGCLFD…PEKQTDHTVK (722 aa). Residues 22 to 184 form the MAM domain; that stretch reads TFSGGCLFDE…VKVLGHPCTR (163 aa). Cysteine 27 and cysteine 36 are joined by a disulfide. Residues asparagine 72, asparagine 92, asparagine 131, and asparagine 249 are each glycosylated (N-linked (GlcNAc...) asparagine). Intrachain disulfides connect cysteine 96-cysteine 182 and cysteine 206-cysteine 260. The Ig-like C2-type domain occupies 186–277; sequence PHFLRIQNVE…VGISNYAELV (92 aa). 4 consecutive Fibronectin type-III domains span residues 284-379, 382-480, 481-587, and 589-671; these read PIAP…CADP, GPRK…TDED, LPGA…SAPS, and PAYE…DSLQ. 8 N-linked (GlcNAc...) asparagine glycosylation sites follow: asparagine 406, asparagine 414, asparagine 454, asparagine 534, asparagine 544, asparagine 598, asparagine 651, and asparagine 681. Residues 743-764 form a helical membrane-spanning segment; the sequence is IAGVIAGILLFVIIFLGVVLVM. Topologically, residues 765–1452 are cytoplasmic; sequence KKRKLAKKRK…EVALEYLNSG (688 aa). Phosphoserine is present on serine 821. 2 Tyrosine-protein phosphatase domains span residues 900–1154 and 1186–1448; these read FKEE…ILEA and IKEE…ALEY. Substrate contacts are provided by residues aspartate 1063, 1095-1101, and glutamine 1139; that span reads CSAGAGR. Cysteine 1095 functions as the Phosphocysteine intermediate in the catalytic mechanism. Cysteine 1389 acts as the Phosphocysteine intermediate in catalysis.

It belongs to the protein-tyrosine phosphatase family. Receptor class 2B subfamily. Homodimer. As to expression, most abundant in lung, less in brain and heart.

Its subcellular location is the cell membrane. The enzyme catalyses O-phospho-L-tyrosyl-[protein] + H2O = L-tyrosyl-[protein] + phosphate. Receptor protein-tyrosine phosphatase that mediates homotypic cell-cell interactions and plays a role in adipogenic differentiation via modulation of p120 catenin/CTNND1 phosphorylation. Promotes CTNND1 dephosphorylation and prevents its cytoplasmic localization where it inhibits SLC2A4 membrane trafficking. In turn, SLC2A4 is directed to the plasma membrane and performs its glucose transporter function. This chain is Receptor-type tyrosine-protein phosphatase mu (Ptprm), found in Mus musculus (Mouse).